The chain runs to 305 residues: Ferredoxin--NADP reductase (305 aa).

FAD-binding residues include Glu31, Tyr42, Val82, and Asp274.

This sequence belongs to the ferredoxin--NADP reductase type 2 family. As to quaternary structure, homodimer. FAD serves as cofactor.

The enzyme catalyses 2 reduced [2Fe-2S]-[ferredoxin] + NADP(+) + H(+) = 2 oxidized [2Fe-2S]-[ferredoxin] + NADPH. The chain is Ferredoxin--NADP reductase from Ignicoccus hospitalis (strain KIN4/I / DSM 18386 / JCM 14125).